The chain runs to 416 residues: 2-aminoadipate transaminase (416 aa).

Residues 102-103 and glutamine 233 contribute to the pyridoxal 5'-phosphate site; that span reads GA. Lysine 259 bears the N6-(pyridoxal phosphate)lysine mark. Threonine 288 serves as a coordination point for pyridoxal 5'-phosphate.

Belongs to the class-III pyridoxal-phosphate-dependent aminotransferase family. Pyridoxal 5'-phosphate serves as cofactor.

The enzyme catalyses L-2-aminoadipate + 2-oxoglutarate = 2-oxoadipate + L-glutamate. The catalysed reaction is 5-aminopentanoate + 2-oxoglutarate = 5-oxopentanoate + L-glutamate. The protein operates within amino-acid degradation. Its function is as follows. Catalyzes the conversion of 2-aminoadipate (2AA) to 2-oxoadipate (2OA). Is most active on L-2-aminoadipate (L-2AA) and shows only weak activity on the enantiomer, D-2-aminoadipate (D-2AA). Shows moderate activity on 5-aminovalerate (5AVA) and weak activity toward 4-aminobutyrate (GABA). Is involved in a D-lysine catabolic pathway. This Pseudomonas putida (strain ATCC 47054 / DSM 6125 / CFBP 8728 / NCIMB 11950 / KT2440) protein is 2-aminoadipate transaminase.